Here is a 277-residue protein sequence, read N- to C-terminus: Ribonuclease HII (277 aa).

Residues 1-32 form a disordered region; sequence MIRNQANKPGRAKAATAARKSPLTKSAAKPAA. The segment covering 20–32 has biased composition (low complexity); that stretch reads KSPLTKSAAKPAA. The region spanning 64-252 is the RNase H type-2 domain; the sequence is WPVAGCDEAG…VVAARRKHQP (189 aa). Residues Asp70, Glu71, and Asp161 each coordinate a divalent metal cation.

The protein belongs to the RNase HII family. Mn(2+) serves as cofactor. Requires Mg(2+) as cofactor.

The protein localises to the cytoplasm. It catalyses the reaction Endonucleolytic cleavage to 5'-phosphomonoester.. Functionally, endonuclease that specifically degrades the RNA of RNA-DNA hybrids. In Bradyrhizobium sp. (strain ORS 278), this protein is Ribonuclease HII.